The sequence spans 339 residues: Probable long-chain-alcohol O-fatty-acyltransferase 7 (339 aa).

Helical transmembrane passes span 7-27 (SLINVGFLTIISVSYCYCLPP), 39-59 (IFPVCVLLVVLPLFFSFSIFT), 113-133 (HLSTYVFPVKIAIFVVLLYVH), 143-163 (FLLCLHPLYVYLLLEILLTLL), 226-246 (MLIGVFATFVTSGVAHEVVFF), 254-274 (TGEVALFFLLHGVCTVAEVAA), and 287-307 (PVVSWMFTIAFVNVTAGWLFF).

The protein belongs to the wax synthase family.

It is found in the membrane. The catalysed reaction is a long chain fatty alcohol + a fatty acyl-CoA = a wax ester + CoA. Its function is as follows. Catalyzes the final step in the synthesis of long-chain linear esters (waxes). This Arabidopsis thaliana (Mouse-ear cress) protein is Probable long-chain-alcohol O-fatty-acyltransferase 7 (AT7).